The chain runs to 450 residues: Tubulin alpha chain (450 aa).

Residue Gln-11 participates in GTP binding. The residue at position 40 (Lys-40) is an N6-acetyllysine. GTP-binding residues include Glu-71, Ser-140, Gly-144, Thr-145, Thr-179, Asn-206, and Asn-228. Glu-71 serves as a coordination point for Mg(2+). Glu-254 is a catalytic residue.

It belongs to the tubulin family. As to quaternary structure, dimer of alpha and beta chains. A typical microtubule is a hollow water-filled tube with an outer diameter of 25 nm and an inner diameter of 15 nM. Alpha-beta heterodimers associate head-to-tail to form protofilaments running lengthwise along the microtubule wall with the beta-tubulin subunit facing the microtubule plus end conferring a structural polarity. Microtubules usually have 13 protofilaments but different protofilament numbers can be found in some organisms and specialized cells. Requires Mg(2+) as cofactor. Post-translationally, acetylation of alpha chains at Lys-40 stabilizes microtubules and affects affinity and processivity of microtubule motors. This modification has a role in multiple cellular functions, ranging from cell motility, cell cycle progression or cell differentiation to intracellular trafficking and signaling.

The protein localises to the cytoplasm. It localises to the cytoskeleton. It catalyses the reaction GTP + H2O = GDP + phosphate + H(+). In terms of biological role, tubulin is the major constituent of microtubules, a cylinder consisting of laterally associated linear protofilaments composed of alpha- and beta-tubulin heterodimers. Microtubules grow by the addition of GTP-tubulin dimers to the microtubule end, where a stabilizing cap forms. Below the cap, tubulin dimers are in GDP-bound state, owing to GTPase activity of alpha-tubulin. The polypeptide is Tubulin alpha chain (Tyrophagus putrescentiae (Mold mite)).